The chain runs to 213 residues: ATP synthase peripheral stalk subunit OSCP, mitochondrial (213 aa).

The N-terminal 23 residues, 1–23 (MAAPAVSGLSRQVRCFSTSVVRP), are a transit peptide targeting the mitochondrion. The SIFI-degron signature appears at 5–23 (AVSGLSRQVRCFSTSVVRP). Residues Lys-54, Lys-60, Lys-70, and Lys-73 each carry the N6-acetyllysine modification. At Lys-90 the chain carries N6-succinyllysine. 2 positions are modified to N6-acetyllysine; alternate: Lys-158 and Lys-162. N6-succinyllysine; alternate occurs at positions 158 and 162. Lys-172, Lys-176, and Lys-192 each carry N6-acetyllysine. Lys-199 carries the N6-succinyllysine modification.

It belongs to the ATPase delta chain family. Component of the ATP synthase complex composed at least of ATP5F1A/subunit alpha, ATP5F1B/subunit beta, ATP5MC1/subunit c (homooctomer), MT-ATP6/subunit a, MT-ATP8/subunit 8, ATP5ME/subunit e, ATP5MF/subunit f, ATP5MG/subunit g, ATP5MK/subunit k, ATP5MJ/subunit j, ATP5F1C/subunit gamma, ATP5F1D/subunit delta, ATP5F1E/subunit epsilon, ATP5PF/subunit F6, ATP5PB/subunit b, ATP5PD/subunit d, ATP5PO/subunit OSCP. ATP synthase complex consists of a soluble F(1) head domain (subunits alpha(3) and beta(3)) - the catalytic core - and a membrane F(0) domain - the membrane proton channel (subunits c, a, 8, e, f, g, k and j). These two domains are linked by a central stalk (subunits gamma, delta, and epsilon) rotating inside the F1 region and a stationary peripheral stalk (subunits F6, b, d, and OSCP). In terms of processing, acetylation at Lys-162 decreases ATP production. Deacetylated by SIRT3. Post-translationally, in response to mitochondrial stress, the precursor protein is ubiquitinated by the SIFI complex in the cytoplasm before mitochondrial import, leading to its degradation. Within the SIFI complex, UBR4 initiates ubiquitin chain that are further elongated or branched by KCMF1.

The protein resides in the mitochondrion. Its subcellular location is the mitochondrion inner membrane. Its function is as follows. Subunit OSCP, of the mitochondrial membrane ATP synthase complex (F(1)F(0) ATP synthase or Complex V) that produces ATP from ADP in the presence of a proton gradient across the membrane which is generated by electron transport complexes of the respiratory chain. ATP synthase complex consist of a soluble F(1) head domain - the catalytic core - and a membrane F(1) domain - the membrane proton channel. These two domains are linked by a central stalk rotating inside the F(1) region and a stationary peripheral stalk. During catalysis, ATP synthesis in the catalytic domain of F(1) is coupled via a rotary mechanism of the central stalk subunits to proton translocation. In vivo, can only synthesize ATP although its ATP hydrolase activity can be activated artificially in vitro. Part of the complex F(0) domain. Part of the complex F(0) domain and the peripheric stalk, which acts as a stator to hold the catalytic alpha(3)beta(3) subcomplex and subunit a/ATP6 static relative to the rotary elements. The sequence is that of ATP synthase peripheral stalk subunit OSCP, mitochondrial from Homo sapiens (Human).